A 95-amino-acid polypeptide reads, in one-letter code: Acylphosphatase (95 aa).

The 88-residue stretch at 8 to 95 (RVSARITGRV…DAFEGFRVRR (88 aa)) folds into the Acylphosphatase-like domain. Residues Arg23 and Asn41 contribute to the active site.

It belongs to the acylphosphatase family.

The enzyme catalyses an acyl phosphate + H2O = a carboxylate + phosphate + H(+). This chain is Acylphosphatase (acyP), found in Salinibacter ruber (strain DSM 13855 / M31).